The chain runs to 284 residues: Tetraspanin-10 (284 aa).

Over 1-11 the chain is Cytoplasmic; sequence MGMGTSTFVIR. A helical membrane pass occupies residues 12 to 32; that stretch reads WVNLLTMLLAVAVIIFGVWMS. Residues 33–43 lie on the Extracellular side of the membrane; it reads THNDGCRRSLT. The chain crosses the membrane as a helical span at residues 44 to 64; sequence FPVIALGGFIFLISIIGFLGA. The Cytoplasmic segment spans residues 65-75; the sequence is CKRSVALLWIY. A helical transmembrane segment spans residues 76-96; it reads LAVLLIVLIAILVFTVLAFIV. Topologically, residues 97-228 are extracellular; that stretch reads TNNGSGHTNP…AGVAQYMKTE (132 aa). Asn-99, Asn-128, and Asn-183 each carry an N-linked (GlcNAc...) asparagine glycan. A helical transmembrane segment spans residues 229 to 249; the sequence is WRLVAIFNVVLFVVLISSLLS. The Cytoplasmic portion of the chain corresponds to 250–284; the sequence is TRFDSEQSFGLLNGLVQISNITFKDCQTTTVPKQF.

This sequence belongs to the tetraspanin (TM4SF) family.

It localises to the membrane. Its function is as follows. May be involved in the regulation of cell differentiation. In Arabidopsis thaliana (Mouse-ear cress), this protein is Tetraspanin-10 (TET10).